A 570-amino-acid chain; its full sequence is Dihydroxy-acid dehydratase (570 aa).

Cysteine 61 lines the [2Fe-2S] cluster pocket. A Mg(2+)-binding site is contributed by aspartate 94. Cysteine 135 is a [2Fe-2S] cluster binding site. Mg(2+) is bound by residues aspartate 136 and lysine 137. Lysine 137 is subject to N6-carboxylysine. Position 207 (cysteine 207) interacts with [2Fe-2S] cluster. Glutamate 459 is a Mg(2+) binding site. Serine 485 acts as the Proton acceptor in catalysis.

The protein belongs to the IlvD/Edd family. In terms of assembly, homodimer. Requires [2Fe-2S] cluster as cofactor. The cofactor is Mg(2+).

The enzyme catalyses (2R)-2,3-dihydroxy-3-methylbutanoate = 3-methyl-2-oxobutanoate + H2O. The catalysed reaction is (2R,3R)-2,3-dihydroxy-3-methylpentanoate = (S)-3-methyl-2-oxopentanoate + H2O. The protein operates within amino-acid biosynthesis; L-isoleucine biosynthesis; L-isoleucine from 2-oxobutanoate: step 3/4. It functions in the pathway amino-acid biosynthesis; L-valine biosynthesis; L-valine from pyruvate: step 3/4. Functions in the biosynthesis of branched-chain amino acids. Catalyzes the dehydration of (2R,3R)-2,3-dihydroxy-3-methylpentanoate (2,3-dihydroxy-3-methylvalerate) into 2-oxo-3-methylpentanoate (2-oxo-3-methylvalerate) and of (2R)-2,3-dihydroxy-3-methylbutanoate (2,3-dihydroxyisovalerate) into 2-oxo-3-methylbutanoate (2-oxoisovalerate), the penultimate precursor to L-isoleucine and L-valine, respectively. The polypeptide is Dihydroxy-acid dehydratase (Lactococcus lactis subsp. cremoris (strain MG1363)).